Consider the following 453-residue polypeptide: Chromosomal replication initiator protein DnaA (453 aa).

A domain I, interacts with DnaA modulators region spans residues 1 to 73 (MELSPQDLWT…ADVVEEILGY (73 aa)). The domain II stretch occupies residues 73-110 (YSIDIQLTSTQGENIAIVGETQVSAYYPTLSGEHPKPI). A domain III, AAA+ region region spans residues 111–327 (KLNPKYTFSR…GALIRAITYI (217 aa)). Gly-155, Gly-157, Lys-158, and Thr-159 together coordinate ATP. The tract at residues 328 to 453 (SISGLSMTVE…HLASRTQKTT (126 aa)) is domain IV, binds dsDNA.

Belongs to the DnaA family. In terms of assembly, oligomerizes as a right-handed, spiral filament on DNA at oriC.

Its subcellular location is the cytoplasm. Its function is as follows. Plays an essential role in the initiation and regulation of chromosomal replication. ATP-DnaA binds to the origin of replication (oriC) to initiate formation of the DNA replication initiation complex once per cell cycle. Binds the DnaA box (a 9 base pair repeat at the origin) and separates the double-stranded (ds)DNA. Forms a right-handed helical filament on oriC DNA; dsDNA binds to the exterior of the filament while single-stranded (ss)DNA is stabiized in the filament's interior. The ATP-DnaA-oriC complex binds and stabilizes one strand of the AT-rich DNA unwinding element (DUE), permitting loading of DNA polymerase. After initiation quickly degrades to an ADP-DnaA complex that is not apt for DNA replication. Binds acidic phospholipids. The sequence is that of Chromosomal replication initiator protein DnaA from Gloeothece citriformis (strain PCC 7424) (Cyanothece sp. (strain PCC 7424)).